The primary structure comprises 260 residues: 3-methyl-2-oxobutanoate hydroxymethyltransferase (260 aa).

Residues D42 and D81 each coordinate Mg(2+). 3-methyl-2-oxobutanoate is bound by residues 42 to 43 (DS), D81, and K109. E111 is a binding site for Mg(2+). E178 functions as the Proton acceptor in the catalytic mechanism.

The protein belongs to the PanB family. In terms of assembly, homodecamer; pentamer of dimers. Requires Mg(2+) as cofactor.

It is found in the cytoplasm. It catalyses the reaction 3-methyl-2-oxobutanoate + (6R)-5,10-methylene-5,6,7,8-tetrahydrofolate + H2O = 2-dehydropantoate + (6S)-5,6,7,8-tetrahydrofolate. It functions in the pathway cofactor biosynthesis; (R)-pantothenate biosynthesis; (R)-pantoate from 3-methyl-2-oxobutanoate: step 1/2. Its function is as follows. Catalyzes the reversible reaction in which hydroxymethyl group from 5,10-methylenetetrahydrofolate is transferred onto alpha-ketoisovalerate to form ketopantoate. In Vesicomyosocius okutanii subsp. Calyptogena okutanii (strain HA), this protein is 3-methyl-2-oxobutanoate hydroxymethyltransferase.